The following is a 90-amino-acid chain: MARTVFCEYLKKEAEGLDFQLYPGELGKRIFDSVSKQAWGEWIKKQTMLVNEKKLNMMNAEHRKLLEQEMVNFLFEGKDVHIEGYVPPSN.

Belongs to the Fe(2+)-trafficking protein family.

In terms of biological role, could be a mediator in iron transactions between iron acquisition and iron-requiring processes, such as synthesis and/or repair of Fe-S clusters in biosynthetic enzymes. In Haemophilus influenzae (strain 86-028NP), this protein is Probable Fe(2+)-trafficking protein.